A 262-amino-acid polypeptide reads, in one-letter code: Adenosylcobinamide-GDP ribazoletransferase (262 aa).

The next 6 helical transmembrane spans lie at 43 to 63, 66 to 86, 120 to 140, 146 to 166, 191 to 211, and 242 to 262; these read YFGL…WLTQ, LPAG…TGGF, GALA…ELAL, AGSA…SLIF, LFIL…IAAL, and AAQQ…GGIL.

This sequence belongs to the CobS family. Mg(2+) is required as a cofactor.

Its subcellular location is the cell inner membrane. The enzyme catalyses alpha-ribazole + adenosylcob(III)inamide-GDP = adenosylcob(III)alamin + GMP + H(+). It carries out the reaction alpha-ribazole 5'-phosphate + adenosylcob(III)inamide-GDP = adenosylcob(III)alamin 5'-phosphate + GMP + H(+). It functions in the pathway cofactor biosynthesis; adenosylcobalamin biosynthesis; adenosylcobalamin from cob(II)yrinate a,c-diamide: step 7/7. Functionally, joins adenosylcobinamide-GDP and alpha-ribazole to generate adenosylcobalamin (Ado-cobalamin). Also synthesizes adenosylcobalamin 5'-phosphate from adenosylcobinamide-GDP and alpha-ribazole 5'-phosphate. This chain is Adenosylcobinamide-GDP ribazoletransferase, found in Shewanella oneidensis (strain ATCC 700550 / JCM 31522 / CIP 106686 / LMG 19005 / NCIMB 14063 / MR-1).